A 294-amino-acid polypeptide reads, in one-letter code: Store-operated calcium entry regulator STIMATE (294 aa).

The tract at residues 1–22 is disordered; that stretch reads MQGPAGNASRGLPGGPPSTVAS. The Cytoplasmic portion of the chain corresponds to 1 to 28; the sequence is MQGPAGNASRGLPGGPPSTVASGAGRCE. Helical transmembrane passes span 29–49, 69–89, and 102–122; these read SGAL…VVAF, IWFL…FANV, and LYLI…YVGV. Residues 149-153 carry the GXXXG motif motif; sequence GAWVG. The next 2 membrane-spanning stretches (helical) occupy residues 156 to 176 and 194 to 214; these read ALYI…LLIL and LAIV…WVVD. Residues 215–294 are Cytoplasmic-facing; that stretch reads NFLMRKGKTK…KKKHRFGLPV (80 aa). The segment at 227–268 is disordered; the sequence is LEERGANQDSRNGSKVRYRRAASHEESESEILISADDEMEES. The tract at residues 241–246 is required for localization in the endoplasmic reticulum; sequence KVRYRR.

Belongs to the STIMATE family. Homooligomer. Interacts with STIM1. As to expression, widely expressed.

It is found in the endoplasmic reticulum membrane. Functionally, acts as a regulator of store-operated Ca(2+) entry (SOCE) at junctional sites that connect the endoplasmic reticulum (ER) and plasma membrane (PM), called ER-plasma membrane (ER-PM) junction or cortical ER. SOCE is a Ca(2+) influx following depletion of intracellular Ca(2+) stores. Acts by interacting with STIM1, promoting STIM1 conformational switch. Involved in STIM1 relocalization to ER-PM junctions. Contributes to the maintenance and reorganization of store-dependent ER-PM junctions. This is Store-operated calcium entry regulator STIMATE from Homo sapiens (Human).